The primary structure comprises 234 residues: tRNA (guanine-N(1)-)-methyltransferase (234 aa).

S-adenosyl-L-methionine contacts are provided by residues G115 and 135 to 140; that span reads VGDYIL.

Belongs to the RNA methyltransferase TrmD family. Homodimer.

The protein localises to the cytoplasm. The catalysed reaction is guanosine(37) in tRNA + S-adenosyl-L-methionine = N(1)-methylguanosine(37) in tRNA + S-adenosyl-L-homocysteine + H(+). Specifically methylates guanosine-37 in various tRNAs. The protein is tRNA (guanine-N(1)-)-methyltransferase of Rickettsia akari (strain Hartford).